Here is a 322-residue protein sequence, read N- to C-terminus: UPF0324 membrane protein BB4178 (322 aa).

10 consecutive transmembrane segments (helical) span residues 13 to 35 (FIRQFGFSPLVVGIVCGMLYGNF), 50 to 69 (FTARRLLRIAVAFYGLNISI), 76 to 98 (GLPGLAVSVGVVASTLLIGTVAG), 108 to 127 (TAMLTAAGSAICGAAAVLAF), 139 to 161 (AVAVATVVLFGTLSMFLYPVIYH), 171 to 193 (ALGIYIGGTVHEVAQVVGAASNI), 209 to 231 (VALLVPVLLVLGFWLRASAAAGA), 241 to 260 (VPWFAIGFLVLAIVNSLDIL), 273 to 292 (VFVLTMAMTALGIETRFAQI), and 296 to 318 (GPRVMALGLVLYAWLVFGGYGIV).

It belongs to the UPF0324 family.

Its subcellular location is the cell membrane. The polypeptide is UPF0324 membrane protein BB4178 (Bordetella bronchiseptica (strain ATCC BAA-588 / NCTC 13252 / RB50) (Alcaligenes bronchisepticus)).